Reading from the N-terminus, the 250-residue chain is 7-carboxy-7-deazaguanine synthase (250 aa).

Residues 15 to 17 and R30 each bind substrate; that span reads VQG. A Radical SAM core domain is found at 21–250; that stretch reads LIGLRQVFIR…PQTHRFMGQL (230 aa). C34, C38, and C41 together coordinate [4Fe-4S] cluster. T43 is a binding site for Mg(2+). T96 lines the substrate pocket. G98 contributes to the S-adenosyl-L-methionine binding site.

This sequence belongs to the radical SAM superfamily. 7-carboxy-7-deazaguanine synthase family. In terms of assembly, homodimer. Requires [4Fe-4S] cluster as cofactor. The cofactor is S-adenosyl-L-methionine. It depends on Mg(2+) as a cofactor.

It catalyses the reaction 6-carboxy-5,6,7,8-tetrahydropterin + H(+) = 7-carboxy-7-deazaguanine + NH4(+). The protein operates within purine metabolism; 7-cyano-7-deazaguanine biosynthesis. Its function is as follows. Catalyzes the complex heterocyclic radical-mediated conversion of 6-carboxy-5,6,7,8-tetrahydropterin (CPH4) to 7-carboxy-7-deazaguanine (CDG), a step common to the biosynthetic pathways of all 7-deazapurine-containing compounds. The protein is 7-carboxy-7-deazaguanine synthase of Geobacter sulfurreducens (strain ATCC 51573 / DSM 12127 / PCA).